Reading from the N-terminus, the 340-residue chain is MTKITVVGAGSWGTALAMVLADNGHDVRIWGNRSELMDEINTKHENSRYLPGITLPSTIVAYSSLEEALVDVNVVLLVVPTKAYREVLQDMKKYVAGPTTWIHASKGIEPGTSKRISEVIEEEIPEDLIKDVVVLSGPSHAEEVGLRQATTVTSAAKRMEAAEEVQDLFMNSYFRVYTNPDIVGVELGGALKNIIALAAGITDGLGLGDNAKAALMTRGLTEIARLGRKMGGNPLTFAGLTGMGDLIVTCTSVHSRNWRAGNMLGKGHSLEEVLESMGMVVEGVRTTKAAHELAEKMEVEMPITAALYDVLFNGNNVKDAVGSLMGRVRKHEVEAIPDLL.

NADPH-binding residues include Ser-11, Trp-12, Arg-33, and Lys-106. Sn-glycerol 3-phosphate is bound by residues Lys-106, Gly-137, and Ser-139. Ala-141 is an NADPH binding site. 5 residues coordinate sn-glycerol 3-phosphate: Lys-192, Asp-245, Ser-255, Arg-256, and Asn-257. The active-site Proton acceptor is the Lys-192. Position 256 (Arg-256) interacts with NADPH. NADPH is bound by residues Val-280 and Glu-282.

Belongs to the NAD-dependent glycerol-3-phosphate dehydrogenase family.

The protein resides in the cytoplasm. It carries out the reaction sn-glycerol 3-phosphate + NAD(+) = dihydroxyacetone phosphate + NADH + H(+). The enzyme catalyses sn-glycerol 3-phosphate + NADP(+) = dihydroxyacetone phosphate + NADPH + H(+). Its pathway is membrane lipid metabolism; glycerophospholipid metabolism. In terms of biological role, catalyzes the reduction of the glycolytic intermediate dihydroxyacetone phosphate (DHAP) to sn-glycerol 3-phosphate (G3P), the key precursor for phospholipid synthesis. This is Glycerol-3-phosphate dehydrogenase [NAD(P)+] from Bacillus cereus (strain 03BB102).